A 202-amino-acid polypeptide reads, in one-letter code: MVNYPHQLKGKKANPTPFKTKKSTVDFANRGMSFEAAINATNDYYLSRGIAVIHKKPTPIQIVKVDYPKRSRAKIVEAYFRQASTTDYSGVYKGLYIDFEAKETRQKTAMPMKNFHLHQIEHMASVLDQKGICFVLLHFSTLKETYYLPAKALIDFFQIDKGNKSMPLDYIKKNGYEIIQGAFPQVPYLDIIEQNFLGGDYN.

4 residues coordinate Mg(2+): Thr-85, Asp-87, Glu-100, and Gln-119.

Belongs to the RecU family. It depends on Mg(2+) as a cofactor.

The protein localises to the cytoplasm. The enzyme catalyses Endonucleolytic cleavage at a junction such as a reciprocal single-stranded crossover between two homologous DNA duplexes (Holliday junction).. In terms of biological role, endonuclease that resolves Holliday junction intermediates in genetic recombination. Cleaves mobile four-strand junctions by introducing symmetrical nicks in paired strands. Promotes annealing of linear ssDNA with homologous dsDNA. Required for DNA repair, homologous recombination and chromosome segregation. In Streptococcus uberis (strain ATCC BAA-854 / 0140J), this protein is Holliday junction resolvase RecU.